A 380-amino-acid chain; its full sequence is Chaperone protein DnaJ (380 aa).

Residues Asp-5–Gly-70 form the J domain. The CR-type zinc-finger motif lies at Gly-139 to Ser-217. Residues Cys-152, Cys-155, Cys-169, Cys-172, Cys-191, Cys-194, Cys-205, and Cys-208 each contribute to the Zn(2+) site. CXXCXGXG motif repeat units follow at residues Cys-152–Gly-159, Cys-169–Gly-176, Cys-191–Gly-198, and Cys-205–Gly-212. The disordered stretch occupies residues Val-224–Gln-245.

The protein belongs to the DnaJ family. Homodimer. Zn(2+) serves as cofactor.

The protein resides in the cytoplasm. Participates actively in the response to hyperosmotic and heat shock by preventing the aggregation of stress-denatured proteins and by disaggregating proteins, also in an autonomous, DnaK-independent fashion. Unfolded proteins bind initially to DnaJ; upon interaction with the DnaJ-bound protein, DnaK hydrolyzes its bound ATP, resulting in the formation of a stable complex. GrpE releases ADP from DnaK; ATP binding to DnaK triggers the release of the substrate protein, thus completing the reaction cycle. Several rounds of ATP-dependent interactions between DnaJ, DnaK and GrpE are required for fully efficient folding. Also involved, together with DnaK and GrpE, in the DNA replication of plasmids through activation of initiation proteins. This Pseudomonas syringae pv. syringae (strain B728a) protein is Chaperone protein DnaJ.